The sequence spans 33 residues: Protamine TP14 (33 aa).

A disordered region spans residues 1–33 (MPRRRRSSRPPVRRRRRPRVSRRRRRRGGRRRR).

As to expression, testis.

The protein localises to the nucleus. It is found in the chromosome. Protamines substitute for histones in the chromatin of sperm during the haploid phase of spermatogenesis. They compact sperm DNA into a highly condensed, stable and inactive complex. This chain is Protamine TP14, found in Oncorhynchus mykiss (Rainbow trout).